The primary structure comprises 911 residues: Chitin synthase G (911 aa).

Disordered stretches follow at residues 1–66 and 107–138; these read MAYQ…VSGY and GRVA…GGLR. The span at 12-34 shows a compositional bias: basic and acidic residues; that stretch reads PHYDDNGHRLQDLPHGSYEEEAS. The span at 54 to 66 shows a compositional bias: polar residues; that stretch reads QHGSSTTRPVSGY. The next 6 membrane-spanning stretches (helical) occupy residues 579 to 599, 624 to 644, 659 to 679, 711 to 731, 840 to 860, and 879 to 899; these read IFST…TTVI, IINT…FILA, SFVV…YLVV, IIII…FMYL, LVTF…SDGV, and ALLW…CWFL.

It belongs to the chitin synthase family. Class III subfamily.

The protein resides in the cell membrane. It carries out the reaction [(1-&gt;4)-N-acetyl-beta-D-glucosaminyl](n) + UDP-N-acetyl-alpha-D-glucosamine = [(1-&gt;4)-N-acetyl-beta-D-glucosaminyl](n+1) + UDP + H(+). Its function is as follows. Polymerizes chitin, a structural polymer of the cell wall and septum, by transferring the sugar moiety of UDP-GlcNAc to the non-reducing end of the growing chitin polymer. The chain is Chitin synthase G (chsG) from Aspergillus fumigatus (strain ATCC MYA-4609 / CBS 101355 / FGSC A1100 / Af293) (Neosartorya fumigata).